The sequence spans 400 residues: Subtilisin-like protease 2 (400 aa).

An N-terminal signal peptide occupies residues 1–20; it reads MKFSQSLIALAACFLPLIAA. Residues 21–119 constitute a propeptide that is removed on maturation; it reads APEEAQHAKI…IERDGKVQAN (99 aa). Positions 42–117 constitute an Inhibitor I9 domain; that stretch reads SYIVVFNKGV…AWIERDGKVQ (76 aa). Residue Asn-82 is glycosylated (N-linked (GlcNAc...) asparagine). The 273-residue stretch at 128–400 folds into the Peptidase S8 domain; sequence TWGLGRISHK…NLIAYNGNGA (273 aa). Catalysis depends on charge relay system residues Asp-160, His-192, and Ser-345.

The protein belongs to the peptidase S8 family.

Its subcellular location is the secreted. Its activity is regulated as follows. Potently inhibited by the serine peptidase inhibitor chymostatin. Also inhibited by antpain and PMSF. Its function is as follows. Major secreted subtilisin-like serine endopeptidase. Preferentially cleaves substrates containing hydrophobic residues at P4, positively charged residues at P3, small or flexible residues at P2, and large, bulky residues at P1. Mediates the degradation of collagen, the major structural protein in the mammalian host. Degrades the nonhelical regions of collagen that function in the cross-linking of the helical components. May function as virulence factor involved in epidermal wing necrosis observed in white nose syndrome (WNS) in bats. The sequence is that of Subtilisin-like protease 2 from Pseudogymnoascus destructans (strain ATCC MYA-4855 / 20631-21) (Bat white-nose syndrome fungus).